The sequence spans 679 residues: Stress-70 protein, mitochondrial (679 aa).

A mitochondrion-targeting transit peptide spans 1–46 (MISASRAAVSRFVGTAASRGPTAARHQDGWNGLSHEAFRIVSRRDY). The tract at residues 1–432 (MISASRAAVS…IQGGVLAGDV (432 aa)) is interaction with NFS1. Residues threonine 63 and asparagine 64 each coordinate ADP. Residues 63–431 (TNSCVAVMEG…AIQGGVLAGD (369 aa)) are nucleotide-binding domain (NBD). At lysine 76 the chain carries N6-acetyllysine. Residue threonine 87 is modified to Phosphothreonine. N6-acetyllysine; alternate is present on residues lysine 135 and lysine 138. Lysine 135 and lysine 138 each carry N6-succinyllysine; alternate. Residue lysine 143 is modified to N6-acetyllysine. Lysine 206 carries the N6-acetyllysine; alternate modification. Position 206 is an N6-succinyllysine; alternate (lysine 206). The residue at position 206 (lysine 206) is an N6-malonyllysine; alternate. Lysine 234 and lysine 288 each carry N6-acetyllysine. Position 300 is an N6-acetyllysine; alternate (lysine 300). An N6-succinyllysine; alternate modification is found at lysine 300. Glutamate 313, lysine 316, and serine 320 together coordinate ADP. At lysine 368 the chain carries N6-succinyllysine. 2 residues coordinate ADP: glycine 388 and arginine 391. Lysine 394 bears the N6-succinyllysine mark. Serine 408 carries the post-translational modification Phosphoserine. The segment at 432–441 (VTDVLLLDVT) is interdomain linker. The segment at 432-679 (VTDVLLLDVT…QKDNQKEEKQ (248 aa)) is interaction with FXN and ISCU. Residues 442–679 (PLSLGIETLG…QKDNQKEEKQ (238 aa)) form a substrate-binding domain (SBD) region. Arginine 513 is modified (omega-N-methylarginine). 2 positions are modified to N6-acetyllysine; alternate: lysine 567 and lysine 600. An N6-succinyllysine; alternate mark is found at lysine 567 and lysine 600. Lysine 610 carries the post-translational modification N6-succinyllysine. Lysine 612 carries the N6-acetyllysine modification. Position 646 is an N6-acetyllysine; alternate (lysine 646). Lysine 646 is subject to N6-succinyllysine; alternate. The tract at residues 656-679 (ASEREGSGSSGTGEQKDNQKEEKQ) is disordered. A compositionally biased stretch (basic and acidic residues) spans 669–679 (EQKDNQKEEKQ).

This sequence belongs to the heat shock protein 70 family. As to quaternary structure, interacts strongly with the intermediate form of FXN and weakly with its mature form. Interacts with HSCB. Associates with the mitochondrial contact site and cristae organizing system (MICOS) complex, composed of at least MICOS10/MIC10, CHCHD3/MIC19, CHCHD6/MIC25, APOOL/MIC27, IMMT/MIC60, APOO/MIC23/MIC26 and QIL1/MIC13. This complex was also known under the names MINOS or MitOS complex. The MICOS complex associates with mitochondrial outer membrane proteins SAMM50, MTX1, MTX2 and DNAJC11, mitochondrial inner membrane protein TMEM11 and with HSPA9. Interacts with DNLZ, the interaction is required to prevent self-aggregation. Interacts with TESPA1. Interacts with PDPN. Interacts with NFU1, NFS1 and ISCU. Interacts with TP53; the interaction promotes TP53 degradation. Interacts (via SBD domain) with UBXN2A; the interaction with UBXN2A inhibits HSPA9/MOT-2 interaction with and degradation of TP53, thereby promotes TP53 translocation to the nucleus. Interacts with ITPR1 AND VDAC1; this interaction couples ITPR1 to VDAC1. Component of the TIM23 mitochondrial inner membrane pre-sequence translocase complex.

Its subcellular location is the mitochondrion. The protein resides in the nucleus. The protein localises to the nucleolus. It localises to the cytoplasm. It is found in the mitochondrion matrix. It catalyses the reaction ATP + H2O = ADP + phosphate + H(+). Its activity is regulated as follows. The chaperone activity is regulated by ATP-induced allosteric coupling of the nucleotide-binding (NBD) and substrate-binding (SBD) domains. ATP binding in the NBD leads to a conformational change in the NBD, which is transferred through the interdomain linker (IDL) to the substrate-binding domain (SBD). This elicits a reduced substrate affinity and a faster substrate exchange rate. Upon hydrolysis of ATP to ADP, the protein undergoes a conformational change that increases its affinity for substrate proteins. It cycles through repeated phases of ATP hydrolysis and nucleotide exchange, facilitating repeated cycles of substrate binding and release. Functions in collaboration with co-chaperones. Functions with the co-chaperone, DNLZ, to maintain solubility and regulate ATP hydrolysis. Nucleotide exchange factors, GRPEL1 and GRPEL2, accelerate nucleotide exchange. Functionally, mitochondrial chaperone that plays a key role in mitochondrial protein import, folding, and assembly. Plays an essential role in the protein quality control system, the correct folding of proteins, the re-folding of misfolded proteins, and the targeting of proteins for subsequent degradation. These processes are achieved through cycles of ATP binding, ATP hydrolysis, and ADP release, mediated by co-chaperones. In mitochondria, it associates with the TIM (translocase of the inner membrane) protein complex to assist in the import and folding of mitochondrial proteins. Plays an important role in mitochondrial iron-sulfur cluster (ISC) biogenesis, interacts with and stabilizes ISC cluster assembly proteins FXN, NFU1, NFS1 and ISCU. Regulates erythropoiesis via stabilization of ISC assembly. Regulates mitochondrial calcium-dependent apoptosis by coupling two calcium channels, ITPR1 and VDAC1, at the mitochondria-associated endoplasmic reticulum (ER) membrane to facilitate calcium transport from the ER lumen to the mitochondria intermembrane space, providing calcium for the downstream calcium channel MCU, which releases it into the mitochondrial matrix. Although primarily located in the mitochondria, it is also found in other cellular compartments. In the cytosol, it associates with proteins involved in signaling, apoptosis, or senescence. It may play a role in cell cycle regulation via its interaction with and promotion of degradation of TP53. May play a role in the control of cell proliferation and cellular aging. Protects against reactive oxygen species (ROS). Extracellular HSPA9 plays a cytoprotective role by preventing cell lysis following immune attack by the membrane attack complex by disrupting formation of the complex. The polypeptide is Stress-70 protein, mitochondrial (Bos taurus (Bovine)).